We begin with the raw amino-acid sequence, 858 residues long: Bifunctional uridylyltransferase/uridylyl-removing enzyme (858 aa).

Positions 1–324 (MSASVAEPPP…PATSGVTRVL (324 aa)) are uridylyltransferase. The uridylyl-removing stretch occupies residues 325-681 (SPGRFVEKQG…ARPSPVGDAL (357 aa)). Residues 443-565 (VDQHILMVLR…VGSERRLTAL (123 aa)) enclose the HD domain. ACT domains follow at residues 682–761 (QVLV…PEPS) and 790–858 (ILSV…AIAV).

The protein belongs to the GlnD family. It depends on Mg(2+) as a cofactor.

It carries out the reaction [protein-PII]-L-tyrosine + UTP = [protein-PII]-uridylyl-L-tyrosine + diphosphate. The catalysed reaction is [protein-PII]-uridylyl-L-tyrosine + H2O = [protein-PII]-L-tyrosine + UMP + H(+). With respect to regulation, uridylyltransferase (UTase) activity is inhibited by glutamine, while glutamine activates uridylyl-removing (UR) activity. Functionally, modifies, by uridylylation and deuridylylation, the PII regulatory proteins (GlnB and homologs), in response to the nitrogen status of the cell that GlnD senses through the glutamine level. Under low glutamine levels, catalyzes the conversion of the PII proteins and UTP to PII-UMP and PPi, while under higher glutamine levels, GlnD hydrolyzes PII-UMP to PII and UMP (deuridylylation). Thus, controls uridylylation state and activity of the PII proteins, and plays an important role in the regulation of nitrogen assimilation and metabolism. This chain is Bifunctional uridylyltransferase/uridylyl-removing enzyme, found in Burkholderia pseudomallei (strain 1106a).